Here is a 427-residue protein sequence, read N- to C-terminus: Peptidase B (427 aa).

The Mn(2+) site is built by lysine 195 and aspartate 200. The active site involves lysine 207. Aspartate 218, aspartate 277, and glutamate 279 together coordinate Mn(2+). Arginine 281 is an active-site residue.

This sequence belongs to the peptidase M17 family. In terms of assembly, homohexamer. Mn(2+) is required as a cofactor.

It is found in the cytoplasm. It catalyses the reaction Release of an N-terminal amino acid, Xaa, from a peptide or arylamide. Xaa is preferably Glu or Asp but may be other amino acids, including Leu, Met, His, Cys and Gln.. Its function is as follows. Probably plays an important role in intracellular peptide degradation. This is Peptidase B from Salmonella agona (strain SL483).